Consider the following 473-residue polypeptide: Lactococcin A secretion protein LcnD-like (473 aa).

The Cytoplasmic portion of the chain corresponds to 1–21 (MFDKKLLESSELYDKRYRNFS). A helical transmembrane segment spans residues 22 to 44 (TLIILPLFILLVGGVIFTFFAHK). Topologically, residues 45 to 473 (ELTVISTGSI…FLDKIMGRTS (429 aa)) are extracellular.

This sequence belongs to the membrane fusion protein (MFP) (TC 8.A.1) family.

It is found in the cell membrane. In terms of biological role, involved in the secretion of a lactococcin. This is Lactococcin A secretion protein LcnD-like (lcnD) from Lactococcus lactis subsp. lactis (strain IL1403) (Streptococcus lactis).